Consider the following 560-residue polypeptide: Nuclear hormone receptor family member nhr-8 (560 aa).

The segment at 1 to 21 is disordered; sequence MPSSSPSMDESRRSAVPPKEP. The segment at residues 23–98 is a DNA-binding region (nuclear receptor); sequence GRICTVCSDR…VGMNSEWLND (76 aa). 2 NR C4-type zinc fingers span residues 26-46 and 62-86; these read CTVC…CESC and CPFS…LNKC. An NR LBD domain is found at 336-560; sequence DEITLLEELH…PLIRELCSFE (225 aa).

The protein belongs to the nuclear hormone receptor family.

The protein localises to the nucleus. In terms of biological role, orphan nuclear receptor. The chain is Nuclear hormone receptor family member nhr-8 (nhr-8) from Caenorhabditis elegans.